Reading from the N-terminus, the 356-residue chain is Trans-enoyl reductase pgmF (356 aa).

Residues 57-60 (VDFK), 175-178 (SGGC), 198-201 (STPN), Tyr-216, 261-262 (VG), and 342-343 (AK) contribute to the NADP(+) site.

It belongs to the zinc-containing alcohol dehydrogenase family.

In terms of biological role, FAD-linked oxidoreductase; part of the gene cluster that mediates the biosynthesis of pleosporalin A, ascomycone A, as well as a third cryptic naphthoquinone derived pigment, all responsible for the coloration of conidia. The pathway begins with the biosynthesis of the cyclized heptaketide 3-acetonyl-1,6,8-trihydroxy-2-naphthaldehyde by the NR-PKS pgmA. The C-6 hydroxyl group is further methylated by the O-methyltransferase pgmB to yield fusarubinaldehyde which is in turn oxidized by the cytochrome P450 monooxygenase pgmC at C-9. The C-1 hydroxyl group is then methylated spontaneously. Although pgmE, pgmD and pgmH are essential for the production of pleosporalin A, it is not the case for the 2 other final products and it remains difficult to assign a specific function to each enzyme. PgmF and pgmG seem not to be involved in pigment biosynthesis although they were regulated by the cluster-specific transcription factor pgmR. The polypeptide is Trans-enoyl reductase pgmF (Aspergillus terreus (strain NIH 2624 / FGSC A1156)).